A 422-amino-acid chain; its full sequence is Synaptotagmin-1 (422 aa).

Residues 1-57 (MVSESHHEALAAPPVTTVATVLPHNATEPASPGEGKEDAFSKLKEKFMNELHKIPLP) lie on the Vesicular side of the membrane. An N-linked (GlcNAc...) asparagine glycan is attached at N25. The helical transmembrane segment at 58–80 (PWALIAIAIVAVLLVLTCCFCIC) threads the bilayer. S-palmitoyl cysteine attachment occurs at residues C75, C76, C78, C80, and C83. The Cytoplasmic segment spans residues 81-422 (KKCLFKKKNK…EVDAMLAVKK (342 aa)). The segment at 113–142 (TMKDQALKDDDAETGLTDGEEKEEPKEEEK) is disordered. Residues 122-134 (DDAETGLTDGEEK) show a composition bias toward acidic residues. The residue at position 129 (T129) is a Phosphothreonine. Residues 136–382 (EPKEEEKLGK…AIGKVFVGYN (247 aa)) are phospholipid binding. In terms of domain architecture, C2 1 spans 142–261 (KLGKLQYSLD…DFGHVTEEWR (120 aa)). L172, D173, and D179 together coordinate Ca(2+). Residue Y230 is modified to Phosphotyrosine. D231, F232, D233, S236, K237, and D239 together coordinate Ca(2+). S265 carries the phosphoserine modification. In terms of domain architecture, C2 2 spans 273-406 (KLGDICFSLR…NPRRPIAQWH (134 aa)). Ca(2+) contacts are provided by D304 and D310. A phosphoserine mark is found at S343 and S345. Ca(2+) contacts are provided by D364, D366, and D372.

This sequence belongs to the synaptotagmin family. Homotetramer. Heterodimer; heterodimerizes with SYT2 in presence of calcium. Interacts with SCAMP5. Interacts with STON2. Forms a complex with SV2B, syntaxin 1 and SNAP25. Interacts with SV2A, SV2B and SV2C. Interacts with RIMS1. Interacts with PRRT2. Interacts with DNAJC5 in a phosphorylation-dependent manner. Interacts (via N-terminus) with RAB3A. Interacts with SYT12. Interacts with calmodulin. Interacts with DNM1 (via C-terminal proline-rich domain (PRD)); this interaction facilitates vesicle fission during clathrin-mediated endocytosis (CME). Ca(2+) is required as a cofactor. In terms of processing, glycosylated.

It localises to the cytoplasmic vesicle. The protein localises to the secretory vesicle membrane. It is found in the secretory vesicle. Its subcellular location is the synaptic vesicle membrane. The protein resides in the chromaffin granule membrane. It localises to the cytoplasm. Calcium sensor that participates in triggering neurotransmitter release at the synapse. May have a regulatory role in the membrane interactions during trafficking of synaptic vesicles at the active zone of the synapse. It binds acidic phospholipids with a specificity that requires the presence of both an acidic head group and a diacyl backbone. A Ca(2+)-dependent interaction between synaptotagmin and putative receptors for activated protein kinase C has also been reported. It can bind to at least three additional proteins in a Ca(2+)-independent manner; these are neurexins, syntaxin and AP2. Plays a role in dendrite formation by melanocytes. This chain is Synaptotagmin-1, found in Bos taurus (Bovine).